The chain runs to 437 residues: Histidine--tRNA ligase (437 aa).

It belongs to the class-II aminoacyl-tRNA synthetase family. In terms of assembly, homodimer.

The protein localises to the cytoplasm. It carries out the reaction tRNA(His) + L-histidine + ATP = L-histidyl-tRNA(His) + AMP + diphosphate + H(+). This chain is Histidine--tRNA ligase, found in Opitutus terrae (strain DSM 11246 / JCM 15787 / PB90-1).